Consider the following 307-residue polypeptide: Leucine-rich repeat-containing protein 59 (307 aa).

The residue at position 1 (methionine 1) is an N-acetylmethionine. An N-acetylthreonine; in Leucine-rich repeat-containing protein 59, N-terminally processed modification is found at threonine 2. The Cytoplasmic segment spans residues 2-244 (TKTGSKGGNL…KPPPRKHNRS (243 aa)). 5 LRR repeats span residues 10–31 (NLRDKLDGNELDLSLSDLNEVP), 40–62 (KATVLDLSCNKLSTLPSDFCGLT), 63–84 (HLVKLDLSKNKLQQLPADFGRL), 86–107 (NLQHLDLLNNRLVTLPVSFAQL), and 109–128 (NLKWLDLKDNPLDPVLAKVA). Residues serine 23 and serine 25 each carry the phosphoserine modification. Residue lysine 73 is modified to N6-succinyllysine. The residue at position 135 (lysine 135) is an N6-acetyllysine. A coiled-coil region spans residues 148-216 (MKAVQADQER…KASKREQEKK (69 aa)). The segment at 150–242 (AVQADQERER…PRKPPPRKHN (93 aa)) is disordered. Basic and acidic residues predominate over residues 154–221 (DQERERQRRL…EQEKKPKKET (68 aa)). Basic residues predominate over residues 229-242 (SGSRPRKPPPRKHN). A helical transmembrane segment spans residues 245 to 265 (WAVLKGLLLLLLLCVAGGLVV). Residues 266–307 (CRVTGLQQQPLCTSVNAIYDNAVQGLRHHEILQWVLQTDSQQ) are Lumenal-facing.

Can form homodimers. Interacts with SGO1. Interacts with FGF1.

Its subcellular location is the microsome membrane. It localises to the endoplasmic reticulum membrane. The protein resides in the nucleus envelope. In terms of biological role, required for nuclear import of FGF1, but not that of FGF2. Might regulate nuclear import of exogenous FGF1 by facilitating interaction with the nuclear import machinery and by transporting cytosolic FGF1 to, and possibly through, the nuclear pores. The chain is Leucine-rich repeat-containing protein 59 (Lrrc59) from Rattus norvegicus (Rat).